Consider the following 512-residue polypeptide: Putative UDP-glucuronosyltransferase ugt-55 (512 aa).

The first 22 residues, 1–22 (MQLLTLPTLIFIFLNYGTPCLS), serve as a signal peptide directing secretion. Residues 487–507 (ILLYLDSIAMFTLTLLTMILI) traverse the membrane as a helical segment.

This sequence belongs to the UDP-glycosyltransferase family.

It localises to the membrane. It carries out the reaction glucuronate acceptor + UDP-alpha-D-glucuronate = acceptor beta-D-glucuronoside + UDP + H(+). The polypeptide is Putative UDP-glucuronosyltransferase ugt-55 (ugt-55) (Caenorhabditis elegans).